The sequence spans 231 residues: MQDEERYMTLNVQSKKRTSTQTTQLTFKDYSVVLHWYKILLGISGTLNGILALALISLILLVSQGVLLKCQKGSHSNTTEHEDIGDLKMNNGTRRNTSNKDLCVSRSADQTVLCQSEWLKYRGKCYWFSNEMKSWSDSYVYCLERKSHLLIIQDELEMAFIQKNLRQSNYVWMGLNFTSLKMTWTWVDGSPLDPKIFFIKGPAKENSCAAIKESKIYSETCSSVFKWICQY.

The Cytoplasmic segment spans residues 1 to 38; it reads MQDEERYMTLNVQSKKRTSTQTTQLTFKDYSVVLHWYK. Tyr7 is modified (phosphotyrosine). The chain crosses the membrane as a helical; Signal-anchor for type II membrane protein span at residues 39–59; the sequence is ILLGISGTLNGILALALISLI. Over 60-231 the chain is Extracellular; sequence LLVSQGVLLK…SSVFKWICQY (172 aa). 4 N-linked (GlcNAc...) asparagine glycosylation sites follow: Asn77, Asn91, Asn96, and Asn176. One can recognise a C-type lectin domain in the interval 121–230; that stretch reads YRGKCYWFSN…CSSVFKWICQ (110 aa). 2 disulfides stabilise this stretch: Cys142-Cys229 and Cys208-Cys221.

In terms of assembly, homodimer. Interacts with CLEC2B. In terms of processing, phosphorylated on Tyr-7; this phosphorylation is required for NKp80/KLRF1-mediated cytotoxicity.

The protein resides in the membrane. In terms of biological role, functions as an activating receptor involved in immunosurveillance upon binding to various ligands displayed at the surface of myeloid cells. Upon interaction with CLEC2B ligand, stimulates NK-cell cytotoxicity and cytokine production leading to the cytolysis of malignant CLEC2B-expressing myeloid cells. Actviation of the common cytotoxicity pathway involves SRC and SYK kinases. This chain is Killer cell lectin-like receptor subfamily F member 1 (KLRF1), found in Macaca fascicularis (Crab-eating macaque).